The chain runs to 355 residues: Fructose-1,6-bisphosphatase class 1 (355 aa).

Residues glutamate 94, aspartate 116, leucine 118, and aspartate 119 each coordinate Mg(2+). Substrate-binding positions include aspartate 119–serine 122, asparagine 211, and tyrosine 263–tyrosine 265. A Mg(2+)-binding site is contributed by glutamate 283.

The protein belongs to the FBPase class 1 family. As to quaternary structure, homotetramer. Mg(2+) is required as a cofactor.

The protein localises to the cytoplasm. The catalysed reaction is beta-D-fructose 1,6-bisphosphate + H2O = beta-D-fructose 6-phosphate + phosphate. The protein operates within carbohydrate biosynthesis; Calvin cycle. The chain is Fructose-1,6-bisphosphatase class 1 from Rhodospirillum rubrum (strain ATCC 11170 / ATH 1.1.1 / DSM 467 / LMG 4362 / NCIMB 8255 / S1).